The sequence spans 285 residues: Nucleotide-binding protein PSPPH_4154 (285 aa).

Position 8–15 (8–15 (GRSGSGKS)) interacts with ATP. Residue 60-63 (DARN) coordinates GTP.

This sequence belongs to the RapZ-like family.

Its function is as follows. Displays ATPase and GTPase activities. This is Nucleotide-binding protein PSPPH_4154 from Pseudomonas savastanoi pv. phaseolicola (strain 1448A / Race 6) (Pseudomonas syringae pv. phaseolicola (strain 1448A / Race 6)).